An 842-amino-acid polypeptide reads, in one-letter code: Alanine--tRNA ligase (842 aa).

Zn(2+) contacts are provided by histidine 549, histidine 553, cysteine 650, and histidine 654.

The protein belongs to the class-II aminoacyl-tRNA synthetase family. Zn(2+) is required as a cofactor.

It is found in the cytoplasm. The catalysed reaction is tRNA(Ala) + L-alanine + ATP = L-alanyl-tRNA(Ala) + AMP + diphosphate. Catalyzes the attachment of alanine to tRNA(Ala) in a two-step reaction: alanine is first activated by ATP to form Ala-AMP and then transferred to the acceptor end of tRNA(Ala). Also edits incorrectly charged Ser-tRNA(Ala) and Gly-tRNA(Ala) via its editing domain. This Campylobacter jejuni subsp. jejuni serotype O:6 (strain 81116 / NCTC 11828) protein is Alanine--tRNA ligase.